The chain runs to 390 residues: Curcumin synthase 3 (390 aa).

C164 is a catalytic residue.

Belongs to the thiolase-like superfamily. Chalcone/stilbene synthases family. As to quaternary structure, homodimer.

It carries out the reaction (E)-feruloylacetyl-CoA + (E)-feruloyl-CoA + H2O = curcumin + CO2 + 2 CoA. The catalysed reaction is (E)-feruloylacetyl-CoA + (E)-4-coumaroyl-CoA + H2O = demethoxycurcumin + CO2 + 2 CoA. It catalyses the reaction (4-coumaroyl)acetyl-CoA + 4-coumaroyl-CoA + H2O = bisdemethoxycurcumin + CO2 + 2 CoA. It functions in the pathway secondary metabolite biosynthesis; flavonoid biosynthesis. Functionally, catalyzes the synthesis of curcumin by condensing feruloyl-CoA with a diketide-CoA in the curcuminoid biosynthesis. Also acts as a demethoxycurcumin synthase by accepting 4-coumaroyl-CoA as a starter substrate instead of feruloyl-CoA. The sequence is that of Curcumin synthase 3 (CURS3) from Curcuma longa (Turmeric).